Reading from the N-terminus, the 421-residue chain is UDP-N-acetylglucosamine 1-carboxyvinyltransferase (421 aa).

22–23 (KN) lines the phosphoenolpyruvate pocket. UDP-N-acetyl-alpha-D-glucosamine is bound at residue arginine 93. Cysteine 117 serves as the catalytic Proton donor. Cysteine 117 is modified (2-(S-cysteinyl)pyruvic acid O-phosphothioketal). UDP-N-acetyl-alpha-D-glucosamine contacts are provided by residues 122–126 (RPVDL), aspartate 308, and isoleucine 330.

It belongs to the EPSP synthase family. MurA subfamily.

The protein localises to the cytoplasm. It catalyses the reaction phosphoenolpyruvate + UDP-N-acetyl-alpha-D-glucosamine = UDP-N-acetyl-3-O-(1-carboxyvinyl)-alpha-D-glucosamine + phosphate. It functions in the pathway cell wall biogenesis; peptidoglycan biosynthesis. Its function is as follows. Cell wall formation. Adds enolpyruvyl to UDP-N-acetylglucosamine. The sequence is that of UDP-N-acetylglucosamine 1-carboxyvinyltransferase from Pseudomonas putida (strain GB-1).